Reading from the N-terminus, the 185-residue chain is Dual-action ribosomal maturation protein DarP (185 aa).

The protein belongs to the DarP family.

Its subcellular location is the cytoplasm. Member of a network of 50S ribosomal subunit biogenesis factors which assembles along the 30S-50S interface, preventing incorrect 23S rRNA structures from forming. Promotes peptidyl transferase center (PTC) maturation. The sequence is that of Dual-action ribosomal maturation protein DarP from Vibrio vulnificus (strain YJ016).